The sequence spans 179 residues: Large ribosomal subunit protein uL6 (179 aa).

This sequence belongs to the universal ribosomal protein uL6 family. In terms of assembly, part of the 50S ribosomal subunit.

Its function is as follows. This protein binds to the 23S rRNA, and is important in its secondary structure. It is located near the subunit interface in the base of the L7/L12 stalk, and near the tRNA binding site of the peptidyltransferase center. The polypeptide is Large ribosomal subunit protein uL6 (Mycolicibacterium vanbaalenii (strain DSM 7251 / JCM 13017 / BCRC 16820 / KCTC 9966 / NRRL B-24157 / PYR-1) (Mycobacterium vanbaalenii)).